The sequence spans 543 residues: MSAPAPSPLAIVDAEPLPRQEEVLTDAALAFVAELLHRRFTRAVTNSSPRRADAAREIARTSTLDFLPETAAVRADDSWRVAGPAALNDRRVEITGPTDRKMTINALNSGAKVWLADFEEPSAPTWENVVLGQVNLSDAYTRNIDFTDERTGKTYALRPLKSWRPSSWPRGWHLNERHLVDPDGSFGARRVVVDFGLYFFHNAQRLLDLGKGPYFYLPKTESHLEARLWNDVFVFAQDYVGIPQGTVRATVLIETITAAYEMEEILYELRDHASGLNAGRWDYLFSIVKNFPATRPKFVLPDRNVTMTKLTMTAFMRRYTNCSSYCHNARASAAIGGMAAFIPSRDAEVNKVAFEKVRADKDREANDGFDGSWVAHPDLVPIAMESFDRCWHRPNQKDRLREDVHVEAADLIAVDSLEATTYAGSSSTAVQVGIRYIEAWLRGLGRVAIFNLMEDAATAEISRSQIWQWINAGVEFEHGEKATPIWPRKSRRGRKWRPVREELGEEPFAARDWQHAHDLVVQVSLDEDYADFLTLPAYERLRG.

The protein belongs to the malate synthase family. In terms of assembly, homodimer.

It localises to the cytoplasm. It carries out the reaction glyoxylate + acetyl-CoA + H2O = (S)-malate + CoA + H(+). The protein operates within carbohydrate metabolism; glyoxylate cycle; (S)-malate from isocitrate: step 2/2. This Streptomyces arenae protein is Malate synthase (aceB).